Consider the following 225-residue polypeptide: Large ribosomal subunit protein mL58 (225 aa).

The segment at 106-138 (PQAPITTPESSSTDAAAADQHGDLPPVLYNPTK) is disordered. Residues 109-119 (PITTPESSSTD) show a composition bias toward polar residues.

This sequence belongs to the mitochondrion-specific ribosomal protein mL58 family. Component of the mitochondrial large ribosomal subunit (mt-LSU). Mature N.crassa 74S mitochondrial ribosomes consist of a small (37S) and a large (54S) subunit. The 37S small subunit contains a 16S ribosomal RNA (16S mt-rRNA) and 32 different proteins. The 54S large subunit contains a 23S rRNA (23S mt-rRNA) and 42 different proteins.

The protein resides in the mitochondrion. Component of the mitochondrial ribosome (mitoribosome), a dedicated translation machinery responsible for the synthesis of mitochondrial genome-encoded proteins, including at least some of the essential transmembrane subunits of the mitochondrial respiratory chain. The mitoribosomes are attached to the mitochondrial inner membrane and translation products are cotranslationally integrated into the membrane. The sequence is that of Large ribosomal subunit protein mL58 (mrpl20) from Neurospora crassa (strain ATCC 24698 / 74-OR23-1A / CBS 708.71 / DSM 1257 / FGSC 987).